We begin with the raw amino-acid sequence, 110 residues long: Phosphoribosyl-ATP pyrophosphatase (110 aa).

The protein belongs to the PRA-PH family.

It is found in the cytoplasm. It catalyses the reaction 1-(5-phospho-beta-D-ribosyl)-ATP + H2O = 1-(5-phospho-beta-D-ribosyl)-5'-AMP + diphosphate + H(+). It functions in the pathway amino-acid biosynthesis; L-histidine biosynthesis; L-histidine from 5-phospho-alpha-D-ribose 1-diphosphate: step 2/9. This is Phosphoribosyl-ATP pyrophosphatase from Teredinibacter turnerae (strain ATCC 39867 / T7901).